Consider the following 636-residue polypeptide: Chaperone protein HtpG (636 aa).

Positions 1–329 are a; substrate-binding; it reads MSKEHGAAAE…TEDLPLNISR (329 aa). The interval 330–550 is b; the sequence is ETLQENALIA…DGGMTASMEK (221 aa). A c region spans residues 551–636; it reads LMRVMNKDES…TGWYAEVRKL (86 aa).

The protein belongs to the heat shock protein 90 family. In terms of assembly, homodimer.

It is found in the cytoplasm. Its function is as follows. Molecular chaperone. Has ATPase activity. This Oleidesulfovibrio alaskensis (strain ATCC BAA-1058 / DSM 17464 / G20) (Desulfovibrio alaskensis) protein is Chaperone protein HtpG.